Here is a 347-residue protein sequence, read N- to C-terminus: NADH-ubiquinone oxidoreductase chain 2 (347 aa).

11 helical membrane-spanning segments follow: residues 2 to 22 (SPYV…MTLI), 25 to 45 (HWLT…PLMT), 56 to 76 (AIKY…SAIF), 96 to 116 (FMMT…FWVP), 122 to 142 (IPLL…ISIF), 149 to 169 (LNMS…GWGG), 178 to 197 (ILAY…IMIY), 202 to 219 (ILNL…FMVL), 241 to 261 (MIII…TGFM), 278 to 298 (LAMM…RIIY), and 326 to 346 (IPTL…FITL).

It belongs to the complex I subunit 2 family.

The protein localises to the mitochondrion inner membrane. The catalysed reaction is a ubiquinone + NADH + 5 H(+)(in) = a ubiquinol + NAD(+) + 4 H(+)(out). In terms of biological role, core subunit of the mitochondrial membrane respiratory chain NADH dehydrogenase (Complex I) that is believed to belong to the minimal assembly required for catalysis. Complex I functions in the transfer of electrons from NADH to the respiratory chain. The immediate electron acceptor for the enzyme is believed to be ubiquinone. The polypeptide is NADH-ubiquinone oxidoreductase chain 2 (MT-ND2) (Didelphis virginiana (North American opossum)).